The primary structure comprises 999 residues: Probable beta-galactosidase C (999 aa).

The first 21 residues, 1–21 (MFFFRFLTTVLLLFNAKLLVA), serve as a signal peptide directing secretion. Asn25 is a glycosylation site (N-linked (GlcNAc...) asparagine). Substrate is bound by residues Tyr80, Asn125, Glu127, and Asn185. Glu186 serves as the catalytic Proton donor. Asn195 carries an N-linked (GlcNAc...) asparagine glycan. Tyr249 is a binding site for substrate. A disulfide bridge links Cys255 with Cys302. An N-linked (GlcNAc...) asparagine glycan is attached at Asn274. The active-site Nucleophile is Glu285. Tyr351 provides a ligand contact to substrate. N-linked (GlcNAc...) asparagine glycosylation is found at Asn389, Asn441, Asn512, Asn519, Asn600, Asn675, Asn713, Asn757, Asn808, and Asn897.

This sequence belongs to the glycosyl hydrolase 35 family.

Its subcellular location is the secreted. The enzyme catalyses Hydrolysis of terminal non-reducing beta-D-galactose residues in beta-D-galactosides.. Cleaves beta-linked terminal galactosyl residues from gangliosides, glycoproteins, and glycosaminoglycans. The protein is Probable beta-galactosidase C (lacC) of Talaromyces marneffei (strain ATCC 18224 / CBS 334.59 / QM 7333) (Penicillium marneffei).